The primary structure comprises 59 residues: Cecropin-C (59 aa).

The N-terminal stretch at 1 to 23 is a signal peptide; that stretch reads MNFKLIFLVALVLMAAFLGQTEG. Valine amide is present on valine 58.

This sequence belongs to the cecropin family.

The protein resides in the secreted. Its function is as follows. Cecropins have lytic and antibacterial activity against several Gram-positive and Gram-negative bacteria. This chain is Cecropin-C (CecC), found in Anopheles gambiae (African malaria mosquito).